The following is a 1164-amino-acid chain: MPTMRRTVSEIRSRAEGYEKTDDVSEKTSLADQEEVRTIFINQPQLTKFCNNHVSTAKYNVITFLPRFLYSQFRRAANSFFLFIALLQQIPDVSPTGRYTTLVPLLFILAVAAIKEIIEDIKRHKADNAVNKKQTQVLRNGAWEIVHWEKVAVGEIVKVTNGEHLPADLLSLSSSEPQAMCYIETSNLDGETNLKIRQGLPATSDIKDIDSLMRISGRIECESPNRHLYDFVGNIRLDGHGTVPLGADQILLRGAQLRNTQWVHGIVVYTGHDTKLMQNSTSPPLKLSNVERITNVQILILFCILIAMSLVCSVGSAIWNRRHSGKDWYLHLHYGGASNFGLNFLTFIILFNNLIPISLLVTLEVVKFTQAYFINWDLDMHYEPTDTAAMARTSNLNEELGQVKYIFSDKTGTLTCNVMQFKKCTIAGVAYGHVPEPEDYGCSPDEWQSSQFGDEKTFNDPSLLDNLQNNHPTAPIICEFLTMMAVCHTAVPEREGDKIIYQAASPDEGALVRAAKQLNFVFTGRTPDSVIIDSLGQEERYELLNVLEFTSARKRMSVVVRTPSGKLRLYCKGADTVIYERLAETSKYKEITLKHLEQFATEGLRTLCFAVAEISESDFEEWRAVYHRASTSVQNRLLKLEESYELIEKNLQLLGATAIEDKLQDQVPETIETLMKADIKIWILTGDKQETAINIGHSCRLLKRNMGMIVINEGSLDGTRETLSRHCTTLGDALRKENDFALIIDGKTLKYALTFGVRQYFLDLALSCKAVICCRVSPLQKSEVVEMVKKQVKVITLAIGDGANDVSMIQTAHVGVGISGNEGLQAANSSDYSIAQFKYLKNLLMVHGAWNYNRVSKCILYCFYKNIVLYIIEIWFAFVNGFSGQILFERWCIGLYNVMFTAMPPLTLGIFERSCRKENMLKYPELYKTSQNALDFNTKVFWVHCLNGLFHSVILFWFPLKALQYGTVFGNGKTSDYLLLGNFVYTFVVITVCLKAGLETSYWTWFSHIAIWGSIALWVVFFGIYSSLWPAVPMAPDMSGEAAMLFSSGVFWVGLLSIPVASLLLDVLYKVIKRTAFKTLVDEVQELEAKSQDPGAVVLGKSLTERAQLLKNVFKKNHVNLYRSESLQQNLLHGYAFSQDENGIVSQSEVIRAYDTTKQRPDEW.

The Cytoplasmic portion of the chain corresponds to Met-1 to Arg-75. Ser-25 is subject to Phosphoserine. Thr-28 is subject to Phosphothreonine. Ser-29 carries the phosphoserine modification. A helical transmembrane segment spans residues Ala-76 to Thr-96. Over Gly-97–Thr-100 the chain is Exoplasmic loop. The chain crosses the membrane as a helical span at residues Thr-101–Ile-121. The Cytoplasmic segment spans residues Lys-122 to Gln-297. A helical transmembrane segment spans residues Ile-298 to Ile-318. At Trp-319 to Asn-339 the chain is on the exoplasmic loop side. A helical membrane pass occupies residues Phe-340–Leu-360. Residues Val-361 to Asn-866 are Cytoplasmic-facing. Asp-409 serves as the catalytic 4-aspartylphosphate intermediate. Positions 409, 410, and 411 each coordinate ATP. Residue Asp-409 participates in Mg(2+) binding. Residue Thr-411 coordinates Mg(2+). The residue at position 443 (Ser-443) is a Phosphoserine. Residues Glu-508, Phe-549, Lys-572, Arg-605, Thr-685, Gly-686, Asp-687, Ala-741–Thr-748, Arg-775, and Lys-781 each bind ATP. A Mg(2+)-binding site is contributed by Asp-801. Asn-804 and Asp-805 together coordinate ATP. Asp-805 provides a ligand contact to Mg(2+). Residues Ile-867 to Leu-887 form a helical membrane-spanning segment. The Exoplasmic loop segment spans residues Phe-888–Arg-890. A helical membrane pass occupies residues Trp-891–Phe-911. Over Glu-912–Lys-939 the chain is Cytoplasmic. A helical membrane pass occupies residues Val-940–Leu-960. Over Lys-961–Tyr-977 the chain is Exoplasmic loop. A helical transmembrane segment spans residues Leu-978–Leu-998. Over Glu-999–His-1008 the chain is Cytoplasmic. The helical transmembrane segment at Ile-1009–Trp-1029 threads the bilayer. At Pro-1030–Met-1044 the chain is on the exoplasmic loop side. The chain crosses the membrane as a helical span at residues Leu-1045–Leu-1065. Residues Asp-1066–Trp-1164 are Cytoplasmic-facing. Residue Gly-1095–Ser-1102 coordinates ATP. The residue at position 1126 (Ser-1126) is a Phosphoserine.

Belongs to the cation transport ATPase (P-type) (TC 3.A.3) family. Type IV subfamily. As to quaternary structure, component of a P4-ATPase flippase complex which consists of a catalytic alpha subunit and an accessory beta subunit. Interacts with TMEM30A to form a flippase complex; this complex forms an intermediate phosphoenzyme. Interacts with TMEM30B; this interaction is reported conflictingly. Requires Mg(2+) as cofactor. In terms of processing, cleaved by calpain in a caspase- and calcium influx-dependent manner only during platelet apoptosis and may lead to inactivation. As to expression, found in most tissues except liver and testis. Most abundant in brain and lung. Also detected in fetal tissues. Isoform 1 is expressed in brain. Isoform 2 and isoform 3 are expressed in reticulocytes. Expressed in mouse hippocampus in both dentate gyrus (DG) and the CA3 regions. Expressed in both neuronal as well as non-neuronal cells within the DG. Highly expressed in platelets.

The protein localises to the cytoplasmic vesicle. It localises to the secretory vesicle. Its subcellular location is the chromaffin granule membrane. It is found in the cytoplasmic granule. The protein resides in the cell membrane. The protein localises to the endoplasmic reticulum. It localises to the golgi apparatus. Its subcellular location is the endomembrane system. The catalysed reaction is ATP + H2O + phospholipidSide 1 = ADP + phosphate + phospholipidSide 2.. It carries out the reaction a 1,2-diacyl-sn-glycero-3-phospho-L-serine(out) + ATP + H2O = a 1,2-diacyl-sn-glycero-3-phospho-L-serine(in) + ADP + phosphate + H(+). With respect to regulation, ATPase activity is stimulated by phosphatidylserine (PS) and minimally by phosphatidylethanolamine (PE). ATPase activity is inhibited by the vanadate and by the presence of calcium. Its function is as follows. Catalytic component of a P4-ATPase flippase complex which catalyzes the hydrolysis of ATP coupled to the transport of aminophospholipids from the outer to the inner leaflet of various membranes and ensures the maintenance of asymmetric distribution of phospholipids. Phospholipid translocation also seems to be implicated in vesicle formation and in uptake of lipid signaling molecules. In vitro, its ATPase activity is selectively and stereospecifically stimulated by phosphatidylserine (PS). The flippase complex ATP8A1:TMEM30A seems to play a role in regulation of cell migration probably involving flippase-mediated translocation of phosphatidylethanolamine (PE) at the cell membrane. Acts as aminophospholipid translocase at the cell membrane in neuronal cells; the activity is associated with hippocampus-dependent learning. May play a role in brain connectivity. This chain is Phospholipid-transporting ATPase IA, found in Mus musculus (Mouse).